The primary structure comprises 341 residues: Ribulose-5-phosphate reductase 2 (341 aa).

Cys-38, His-64, Glu-65, and Glu-144 together coordinate Zn(2+).

Belongs to the zinc-containing alcohol dehydrogenase family. As to quaternary structure, heterodimer together with TarI. Zn(2+) serves as cofactor.

It carries out the reaction D-ribitol 5-phosphate + NADP(+) = D-ribulose 5-phosphate + NADPH + H(+). It participates in cell wall biogenesis; poly(ribitol phosphate) teichoic acid biosynthesis. In terms of biological role, catalyzes the NADPH dependent reduction of D-ribulose 5-phosphate to D-ribitol 5-phosphate. This Staphylococcus aureus (strain NCTC 8325 / PS 47) protein is Ribulose-5-phosphate reductase 2.